We begin with the raw amino-acid sequence, 334 residues long: Leucine-rich repeat-containing protein 26 (334 aa).

A signal peptide spans 1–30 (MRGSFFSRLPPQLSLLLLLLLLLSWRRVWT). The Extracellular segment spans residues 31 to 265 (QEHIGTDPSK…QCTQSLAARD (235 aa)). One can recognise an LRRNT domain in the interval 38 to 75 (PSKSPVAPVCPEACSCSPGGKANCSALALPAVPAGLSW). Intrachain disulfides connect C47-C53 and C51-C61. LRR repeat units follow at residues 76–97 (QVRS…AFAD), 100–121 (ALLY…AFWG), 124–145 (VLQR…TFTP), 148–169 (ALSF…ILGP), and 172–194 (LLRV…LNSL). Residues 205–259 (NPWACSCALRPLCTWLRKHPRPTSETETLLCVSPKLQTLNLLTDFPDNAFKQCTQ) enclose the LRRCT domain. 2 cysteine pairs are disulfide-bonded: C209/C235 and C211/C257. The chain crosses the membrane as a helical span at residues 266–286 (LAVVYALGPASFLASLAICLA). Topologically, residues 287–334 (LGSVLTACGARRRRRRTTVRHLIRRQPDPEGPASLEDVGSPTTTAIQA) are cytoplasmic. The segment at 312-334 (QPDPEGPASLEDVGSPTTTAIQA) is disordered.

In terms of assembly, interacts with KCNMA1.

The protein resides in the cell membrane. It is found in the cytoplasm. Its subcellular location is the cytoskeleton. In terms of biological role, auxiliary protein of the large-conductance, voltage and calcium-activated potassium channel (BK alpha). Required for the conversion of BK alpha channels from a high-voltage to a low-voltage activated channel type in non-excitable cells. These are characterized by negative membrane voltages and constant low levels of calcium. In Rattus norvegicus (Rat), this protein is Leucine-rich repeat-containing protein 26 (Lrrc26).